The following is a 244-amino-acid chain: MPDMSQLKELPFSTLQFYATAPYPCSYLPGRQARSQVAAPGHLINAGTYSQLVEQGFRRSGLFTYRPHCDNCHACVPVRVDAARFEPNRTQRRAWRSHQALRAFVAELAWSPEHYDLYTRYQQGRHPGGGMDEDSRTQYAQFLLTTRVNTRLVEFRAPQGQLAMISIIDVLDDGLSSVYTFYDPDMAGSLGTYSILWQIEQCRTLDLPWLYLGYWIADSRKMAYKANFRPLQMHVDGAWRETPP.

Belongs to the R-transferase family. Bpt subfamily.

It localises to the cytoplasm. It catalyses the reaction N-terminal L-glutamyl-[protein] + L-leucyl-tRNA(Leu) = N-terminal L-leucyl-L-glutamyl-[protein] + tRNA(Leu) + H(+). The enzyme catalyses N-terminal L-aspartyl-[protein] + L-leucyl-tRNA(Leu) = N-terminal L-leucyl-L-aspartyl-[protein] + tRNA(Leu) + H(+). In terms of biological role, functions in the N-end rule pathway of protein degradation where it conjugates Leu from its aminoacyl-tRNA to the N-termini of proteins containing an N-terminal aspartate or glutamate. The protein is Aspartate/glutamate leucyltransferase of Bordetella bronchiseptica (strain ATCC BAA-588 / NCTC 13252 / RB50) (Alcaligenes bronchisepticus).